Here is a 301-residue protein sequence, read N- to C-terminus: GTP cyclohydrolase FolE2 (301 aa).

The protein belongs to the GTP cyclohydrolase IV family.

It carries out the reaction GTP + H2O = 7,8-dihydroneopterin 3'-triphosphate + formate + H(+). It participates in cofactor biosynthesis; 7,8-dihydroneopterin triphosphate biosynthesis; 7,8-dihydroneopterin triphosphate from GTP: step 1/1. In terms of biological role, converts GTP to 7,8-dihydroneopterin triphosphate. The polypeptide is GTP cyclohydrolase FolE2 (Pseudomonas savastanoi pv. phaseolicola (strain 1448A / Race 6) (Pseudomonas syringae pv. phaseolicola (strain 1448A / Race 6))).